The following is a 168-amino-acid chain: Ribosome-binding factor A (168 aa).

Over residues R125–P138 the composition is skewed to basic and acidic residues. Positions R125–R168 are disordered.

The protein belongs to the RbfA family. In terms of assembly, monomer. Binds 30S ribosomal subunits, but not 50S ribosomal subunits or 70S ribosomes.

The protein resides in the cytoplasm. In terms of biological role, one of several proteins that assist in the late maturation steps of the functional core of the 30S ribosomal subunit. Associates with free 30S ribosomal subunits (but not with 30S subunits that are part of 70S ribosomes or polysomes). Required for efficient processing of 16S rRNA. May interact with the 5'-terminal helix region of 16S rRNA. This chain is Ribosome-binding factor A, found in Mycolicibacterium gilvum (strain PYR-GCK) (Mycobacterium gilvum (strain PYR-GCK)).